A 60-amino-acid chain; its full sequence is Ribosome-inactivating protein dianthin-32 (60 aa).

It belongs to the ribosome-inactivating protein family. Type 1 RIP subfamily.

It carries out the reaction Endohydrolysis of the N-glycosidic bond at one specific adenosine on the 28S rRNA.. Single-chain ribosome-inactivating protein. This is Ribosome-inactivating protein dianthin-32 from Dianthus caryophyllus (Carnation).